The sequence spans 630 residues: Cytochrome B pre-mRNA-processing protein 2 (630 aa).

It localises to the mitochondrion. Appears to be specifically required for the splicing of the terminal intron (bI5) of the cytochrome b pre-mRNA. Can also stimulates the splicing of the omega intron of the precursor of large ribosomal RNA. The polypeptide is Cytochrome B pre-mRNA-processing protein 2 (CBP2) (Saccharomyces cerevisiae (strain ATCC 204508 / S288c) (Baker's yeast)).